The primary structure comprises 293 residues: Ethanolamine ammonia-lyase small subunit (293 aa).

Positions 207 and 228 each coordinate adenosylcob(III)alamin.

This sequence belongs to the EutC family. The basic unit is a heterodimer which dimerizes to form tetramers. The heterotetramers trimerize; 6 large subunits form a core ring with 6 small subunits projecting outwards. It depends on adenosylcob(III)alamin as a cofactor.

It localises to the bacterial microcompartment. The catalysed reaction is ethanolamine = acetaldehyde + NH4(+). The protein operates within amine and polyamine degradation; ethanolamine degradation. Functionally, catalyzes the deamination of various vicinal amino-alcohols to oxo compounds. Allows this organism to utilize ethanolamine as the sole source of nitrogen and carbon in the presence of external vitamin B12. The protein is Ethanolamine ammonia-lyase small subunit of Listeria innocua serovar 6a (strain ATCC BAA-680 / CLIP 11262).